A 64-amino-acid chain; its full sequence is uncharacterized protein (64 aa).

To P.abyssi PAB3148.

This is an uncharacterized protein from Archaeoglobus fulgidus (strain ATCC 49558 / DSM 4304 / JCM 9628 / NBRC 100126 / VC-16).